We begin with the raw amino-acid sequence, 288 residues long: MAEKKQWHETLHDQFGQYFAVDNVLYHEKTDHQDLIIFENAAFGRVMALDGVVQTTERDEFIYHEMMTHVPLLAHGHAKHVLIIGGGDGAMLREVTRHKNVESITMVEIDAGVVSFCRQYLPNHNADSYDDPRFKLVIDDGVNFVNQTSQTFDVIISDCTDPIGPGESLFTSAFYEGCKRCLNPSGIFVAQNGVCFLQQEEAIDSHRKLSHYFSDVGFYQAAIPTYYGGIMTFAWATDNDALRHLSTEIIQARFLASGLKCRYYNPAIHTAAFALPQYLQDALASQPS.

The 230-residue stretch at 9-238 (ETLHDQFGQY…GIMTFAWATD (230 aa)) folds into the PABS domain. Q33 serves as a coordination point for S-methyl-5'-thioadenosine. Residues H64 and D88 each contribute to the spermidine site. S-methyl-5'-thioadenosine-binding positions include E108 and 140 to 141 (DG). D158 (proton acceptor) is an active-site residue. 158-161 (DCTD) provides a ligand contact to spermidine. Residue P165 participates in S-methyl-5'-thioadenosine binding.

This sequence belongs to the spermidine/spermine synthase family. In terms of assembly, homodimer or homotetramer.

It is found in the cytoplasm. The catalysed reaction is S-adenosyl 3-(methylsulfanyl)propylamine + putrescine = S-methyl-5'-thioadenosine + spermidine + H(+). It functions in the pathway amine and polyamine biosynthesis; spermidine biosynthesis; spermidine from putrescine: step 1/1. In terms of biological role, catalyzes the irreversible transfer of a propylamine group from the amino donor S-adenosylmethioninamine (decarboxy-AdoMet) to putrescine (1,4-diaminobutane) to yield spermidine. The polypeptide is Polyamine aminopropyltransferase (Shigella boydii serotype 4 (strain Sb227)).